A 105-amino-acid chain; its full sequence is MDKFYNYNSSSHQALLSFKVKPNSKQNLISNFVIINNIQYLKLSIKAIPEQGKANSEIINYLAKEWKLSRSNIEIIKGHTHSLKTILIKNINEDYLNLIINSYIK.

It belongs to the UPF0235 family.

This is UPF0235 protein A1G_07140 from Rickettsia rickettsii (strain Sheila Smith).